A 201-amino-acid chain; its full sequence is Two-component response regulator ORR9 (201 aa).

Residues 10–142 (HVLAVDDSLP…DMSKLKPHIL (133 aa)) enclose the Response regulatory domain. Asp-75 bears the 4-aspartylphosphate mark. The disordered stretch occupies residues 149-201 (HYQQEQNLQSNSESNNSSNPTSENSSSSTSSNSHKRKAVDEEILPHTIRPRHS). The segment covering 158–180 (SNSESNNSSNPTSENSSSSTSSN) has biased composition (low complexity).

The protein belongs to the ARR family. Type-A subfamily. Post-translationally, two-component system major event consists of a His-to-Asp phosphorelay between a sensor histidine kinase (HK) and a response regulator (RR). In plants, the His-to-Asp phosphorelay involves an additional intermediate named Histidine-containing phosphotransfer protein (HPt). This multistep phosphorelay consists of a His-Asp-His-Asp sequential transfer of a phosphate group between first a His and an Asp of the HK protein, followed by the transfer to a conserved His of the HPt protein and finally the transfer to an Asp in the receiver domain of the RR protein.

Functions as a response regulator involved in His-to-Asp phosphorelay signal transduction system. Phosphorylation of the Asp residue in the receiver domain activates the ability of the protein to promote the transcription of target genes. Type-A response regulators seem to act as negative regulators of the cytokinin signaling. In Oryza sativa subsp. japonica (Rice), this protein is Two-component response regulator ORR9.